An 81-amino-acid chain; its full sequence is Acyl carrier protein (81 aa).

A Carrier domain is found at 2–80 (ASNEEILAGL…DAVSYIASAQ (79 aa)). An O-(pantetheine 4'-phosphoryl)serine modification is found at Ser40.

Belongs to the acyl carrier protein (ACP) family. 4'-phosphopantetheine is transferred from CoA to a specific serine of apo-ACP by AcpS. This modification is essential for activity because fatty acids are bound in thioester linkage to the sulfhydryl of the prosthetic group.

The protein resides in the cytoplasm. It participates in lipid metabolism; fatty acid biosynthesis. In terms of biological role, carrier of the growing fatty acid chain in fatty acid biosynthesis. This Renibacterium salmoninarum (strain ATCC 33209 / DSM 20767 / JCM 11484 / NBRC 15589 / NCIMB 2235) protein is Acyl carrier protein.